We begin with the raw amino-acid sequence, 290 residues long: Ribonuclease 3 (290 aa).

An RNase III domain is found at 20–145 (YSCFYRILGF…FIGAIYLDRG (126 aa)). Position 62 (Glu62) interacts with Mg(2+). Residue Asp66 is part of the active site. Mg(2+)-binding residues include Asn131 and Glu134. The active site involves Glu134. Residues 173-242 (NFKSKLIEWS…AQMTLKKIKG (70 aa)) form the DRBM domain. The segment at 254–290 (KTQNNVPAEDTTPESETSLTAENQQIDEIISTEEISV) is disordered. Over residues 267–279 (ESETSLTAENQQI) the composition is skewed to polar residues.

Belongs to the ribonuclease III family. As to quaternary structure, homodimer. The cofactor is Mg(2+).

Its subcellular location is the cytoplasm. It catalyses the reaction Endonucleolytic cleavage to 5'-phosphomonoester.. Functionally, digests double-stranded RNA. Involved in the processing of primary rRNA transcript to yield the immediate precursors to the large and small rRNAs (23S and 16S). Processes some mRNAs, and tRNAs when they are encoded in the rRNA operon. Processes pre-crRNA and tracrRNA of type II CRISPR loci if present in the organism. This Bacteroides fragilis (strain ATCC 25285 / DSM 2151 / CCUG 4856 / JCM 11019 / LMG 10263 / NCTC 9343 / Onslow / VPI 2553 / EN-2) protein is Ribonuclease 3.